Here is a 109-residue protein sequence, read N- to C-terminus: MFGKGGLGNLMKQAQQMQEKMQKMQEEIALVEVTGESGAGLVKVTINGAHNCRRVEIDPSLMEDDKEMLEDLVAAAFNDAARRIESEQKERMASVSSGMQLPPGFKMPF.

The disordered stretch occupies residues 89-109 (KERMASVSSGMQLPPGFKMPF).

Belongs to the YbaB/EbfC family. In terms of assembly, homodimer.

It localises to the cytoplasm. The protein resides in the nucleoid. Binds to DNA and alters its conformation. May be involved in regulation of gene expression, nucleoid organization and DNA protection. The protein is Nucleoid-associated protein NT01EI_1109 of Edwardsiella ictaluri (strain 93-146).